The sequence spans 156 residues: Ribonuclease pancreatic (156 aa).

The N-terminal stretch at 1–26 (MGLEKSLVFFPLLVLLALGWVQPCLG) is a signal peptide. Lys33 and Arg36 together coordinate substrate. The active-site Proton acceptor is the His38. Intrachain disulfides connect Cys54-Cys112, Cys68-Cys123, Cys86-Cys138, and Cys93-Cys100. 69–73 (KPVNT) contacts substrate. N-linked (GlcNAc...) asparagine glycosylation is present at Asn90. Residues Lys94 and Arg113 each contribute to the substrate site. His147 (proton donor) is an active-site residue.

This sequence belongs to the pancreatic ribonuclease family. Monomer. Interacts with and forms tight 1:1 complexes with RNH1. Dimerization of two such complexes may occur. Interaction with RNH1 inhibits this protein. In terms of tissue distribution, pancreas.

The protein localises to the secreted. The catalysed reaction is an [RNA] containing cytidine + H2O = an [RNA]-3'-cytidine-3'-phosphate + a 5'-hydroxy-ribonucleotide-3'-[RNA].. It catalyses the reaction an [RNA] containing uridine + H2O = an [RNA]-3'-uridine-3'-phosphate + a 5'-hydroxy-ribonucleotide-3'-[RNA].. In terms of biological role, endonuclease that catalyzes the cleavage of RNA on the 3' side of pyrimidine nucleotides. Acts on single-stranded and double-stranded RNA. The protein is Ribonuclease pancreatic (RNASE1) of Glis glis (Fat dormouse).